A 769-amino-acid chain; its full sequence is Serine protease HtrA-like (769 aa).

Basic residues predominate over residues methionine 1–glutamate 20. Residues methionine 1–alanine 390 form a disordered region. 2 stretches are compositionally biased toward basic and acidic residues: residues phenylalanine 21–lysine 64 and leucine 71–lysine 108. Over residues tyrosine 126–lysine 137 the composition is skewed to polar residues. Basic and acidic residues predominate over residues serine 138–serine 186. The span at glutamine 247–serine 262 shows a compositional bias: polar residues. 2 stretches are compositionally biased toward basic and acidic residues: residues glutamine 264–aspartate 296 and lysine 310–asparagine 330. Over residues alanine 331 to histidine 347 the composition is skewed to polar residues. The span at arginine 348–asparagine 364 shows a compositional bias: basic and acidic residues. Positions glycine 365–alanine 390 are enriched in polar residues. Residues leucine 410–valine 430 traverse the membrane as a helical segment. Residues histidine 504, aspartate 534, and serine 619 each act as charge relay system in the active site. The PDZ domain occupies isoleucine 680–aspartate 733.

It belongs to the peptidase S1C family.

Its subcellular location is the cell membrane. This chain is Serine protease HtrA-like, found in Staphylococcus aureus (strain USA300).